Here is a 1223-residue protein sequence, read N- to C-terminus: ATP-dependent DNA helicase P143 (1223 aa).

Residues 692–701 (RKCRCVQKIK) carry the Nuclear localization signal motif. An ATP-binding site is contributed by 919–926 (GVPLSGKS). The segment at residues 967-981 (TINELKKCSESFFKK) is a DNA-binding region (H-T-H motif).

It localises to the host nucleus. The enzyme catalyses ATP + H2O = ADP + phosphate + H(+). Its function is as follows. Essential for the initiation of viral DNA replication, it may contribute to other functions such as controlling the switch to the late phase and leading to the inhibition of host protein synthesis. Required for late and very late gene expression. This chain is ATP-dependent DNA helicase P143 (P143), found in Orgyia pseudotsugata multicapsid polyhedrosis virus (OpMNPV).